We begin with the raw amino-acid sequence, 375 residues long: Proton-coupled zinc antiporter SLC30A8 (375 aa).

The Cytoplasmic portion of the chain corresponds to 1-68; it reads MKGPEKAYLV…QREQTSAKKK (68 aa). Zn(2+) is bound by residues His-46, Cys-47, and His-48. Residues 46–48 carry the HCH Motif; seals regulatory zinc-binding pocket motif; sequence HCH. The helical transmembrane segment at 69 to 89 threads the bilayer; that stretch reads LCIASLICFVFISAEIVGGYI. The Lumenal, vesicle portion of the chain corresponds to 90–98; the sequence is AGSLAVVTD. The chain crosses the membrane as a helical span at residues 99–119; that stretch reads AAHLLVDLSSFFISLGSLWLS. The Zn(2+) site is built by His-101 and Asp-105. Residues 120-135 are Cytoplasmic-facing; the sequence is SKSSTMRLTFGWYRAE. The helical transmembrane segment at 136-156 threads the bilayer; the sequence is ILGALMSIITIWLVTGVLVYL. The Lumenal, vesicle portion of the chain corresponds to 157–170; the sequence is AIERIIRPDYTIDG. The helical transmembrane segment at 171-191 threads the bilayer; sequence TVMLITSACALGANVVLALIL. Topologically, residues 192–223 are cytoplasmic; sequence HQSGHGHSHAGGKHEHMASEYKPQTNASIRAA. A helical transmembrane segment spans residues 224 to 244; it reads FIHVIGDLFQSISVLISALII. Residues His-226 and Asp-230 each contribute to the Zn(2+) site. The Lumenal, vesicle segment spans residues 245-251; the sequence is YFKPEYK. The chain crosses the membrane as a helical span at residues 252–272; it reads IADPICTFIFSIFVLITTVTV. Over 273 to 375 the chain is Cytoplasmic; the sequence is LRDLLNILME…ECMFCYEPTQ (103 aa). Zn(2+) contacts are provided by His-307, His-324, His-351, Glu-358, Cys-367, and Cys-370.

The protein belongs to the cation diffusion facilitator (CDF) transporter (TC 2.A.4) family. SLC30A subfamily. In terms of assembly, homodimer.

Its subcellular location is the cytoplasmic vesicle. The protein resides in the secretory vesicle membrane. The protein localises to the cell membrane. The catalysed reaction is Zn(2+)(in) + 2 H(+)(out) = Zn(2+)(out) + 2 H(+)(in). Proton-coupled zinc ion antiporter mediating the entry of zinc into the lumen of pancreatic beta cell secretory granules, thereby regulating insulin secretion. The polypeptide is Proton-coupled zinc antiporter SLC30A8 (slc30a8) (Xenopus laevis (African clawed frog)).